Reading from the N-terminus, the 543-residue chain is EH domain-containing protein 2 (543 aa).

A Phosphoserine modification is found at S3. The 232-residue stretch at 55-286 (FDGKPMVLVA…DLFRDIQGLP (232 aa)) folds into the Dynamin-type G domain. Positions 65-72 (GQYSTGKT) are G1 motif. Residue 65-72 (GQYSTGKT) coordinates ATP. Residues 91–92 (EP) form a G2 motif region. The KPF loop; caveolar targeting signature appears at 120–122 (KPF). A G3 motif region spans residues 153 to 156 (DTPG). The G4 motif stretch occupies residues 219–222 (NKAD). K220 contributes to the ATP binding site. A region of interest (G5 motif) is located at residue V243. Position 258 (W258) interacts with ATP. The interval 320 to 340 (SVFGKENKKKQLILKLPVIFA) is mediates membrane-binding. 5 positions are modified to phosphoserine: S438, S468, S470, S484, and S493. Residues 449 to 537 (DKSKYDEIFY…RRLVPPSKRR (89 aa)) enclose the EH domain. In terms of domain architecture, EF-hand spans 481–516 (LPNSVLGRIWKLSDVDRDGMLDDEEFALASHLIEAK). Ca(2+)-binding residues include D494, D496, D498, M500, and E505. Residues 523–543 (PANLPRRLVPPSKRRHKGSAE) are disordered. Residues 534–543 (SKRRHKGSAE) are compositionally biased toward basic residues.

Belongs to the TRAFAC class dynamin-like GTPase superfamily. Dynamin/Fzo/YdjA family. EHD subfamily. As to quaternary structure, homodimer and homooligomer. Interacts with EHD1. May also interact with EHD3 and EHD4. Interacts with MYOF. Interacts with EHBP1. Interacts with FER1L5 (via second C2 domain). Interacts with CAV1 in a cholesterol-dependent manner. Interacts (via EH domain) with PACSIN2 (via NPF motifs); this interaction probably stabilizes the caveolae. As to expression, highly expressed in heart and moderately expressed in placenta, lung, and skeletal muscle.

Its subcellular location is the cell membrane. It is found in the membrane. It localises to the caveola. The protein localises to the endosome membrane. The protein resides in the cytoplasm. Its subcellular location is the cytosol. The very low intrinsic ATPase activity is increased upon interaction with liposomes. Functionally, ATP- and membrane-binding protein that controls membrane reorganization/tubulation upon ATP hydrolysis. Plays a role in membrane trafficking between the plasma membrane and endosomes. Important for the internalization of GLUT4. Required for fusion of myoblasts to skeletal muscle myotubes. Required for normal translocation of FER1L5 to the plasma membrane. Regulates the equilibrium between cell surface-associated and cell surface-dissociated caveolae by constraining caveolae at the cell membrane. The sequence is that of EH domain-containing protein 2 from Homo sapiens (Human).